A 278-amino-acid chain; its full sequence is Acyl-[acyl-carrier-protein]--UDP-N-acetylglucosamine O-acyltransferase (278 aa).

The protein belongs to the transferase hexapeptide repeat family. LpxA subfamily. Homotrimer.

Its subcellular location is the cytoplasm. The catalysed reaction is a (3R)-hydroxyacyl-[ACP] + UDP-N-acetyl-alpha-D-glucosamine = a UDP-3-O-[(3R)-3-hydroxyacyl]-N-acetyl-alpha-D-glucosamine + holo-[ACP]. The protein operates within glycolipid biosynthesis; lipid IV(A) biosynthesis; lipid IV(A) from (3R)-3-hydroxytetradecanoyl-[acyl-carrier-protein] and UDP-N-acetyl-alpha-D-glucosamine: step 1/6. In terms of biological role, involved in the biosynthesis of lipid A, a phosphorylated glycolipid that anchors the lipopolysaccharide to the outer membrane of the cell. In Brucella anthropi (strain ATCC 49188 / DSM 6882 / CCUG 24695 / JCM 21032 / LMG 3331 / NBRC 15819 / NCTC 12168 / Alc 37) (Ochrobactrum anthropi), this protein is Acyl-[acyl-carrier-protein]--UDP-N-acetylglucosamine O-acyltransferase.